The following is a 334-amino-acid chain: uncharacterized protein (334 aa).

It belongs to the MG414/MG415 family.

This is an uncharacterized protein from Mycoplasma pneumoniae (strain ATCC 29342 / M129 / Subtype 1) (Mycoplasmoides pneumoniae).